The sequence spans 257 residues: NAD-capped RNA hydrolase NudC (257 aa).

Arg-69 lines the substrate pocket. Zn(2+)-binding residues include Cys-98 and Cys-101. Residue Glu-111 participates in substrate binding. Positions 116 and 119 each coordinate Zn(2+). Residue Tyr-124 participates in substrate binding. A Nudix hydrolase domain is found at 125 to 248; sequence PQIAPCIIVA…TVARRLIEDT (124 aa). Positions 158, 174, and 178 each coordinate a divalent metal cation. The Nudix box signature appears at 159 to 180; the sequence is GFVEVGETLEQAVAREVMEESG. 192 to 199 lines the substrate pocket; sequence QPWPFPQS. Glu-219 contacts a divalent metal cation. Substrate is bound at residue Ala-241.

The protein belongs to the Nudix hydrolase family. NudC subfamily. As to quaternary structure, homodimer. Requires Mg(2+) as cofactor. It depends on Mn(2+) as a cofactor. Zn(2+) is required as a cofactor.

It carries out the reaction a 5'-end NAD(+)-phospho-ribonucleoside in mRNA + H2O = a 5'-end phospho-adenosine-phospho-ribonucleoside in mRNA + beta-nicotinamide D-ribonucleotide + 2 H(+). It catalyses the reaction NAD(+) + H2O = beta-nicotinamide D-ribonucleotide + AMP + 2 H(+). The enzyme catalyses NADH + H2O = reduced beta-nicotinamide D-ribonucleotide + AMP + 2 H(+). MRNA decapping enzyme that specifically removes the nicotinamide adenine dinucleotide (NAD) cap from a subset of mRNAs by hydrolyzing the diphosphate linkage to produce nicotinamide mononucleotide (NMN) and 5' monophosphate mRNA. The NAD-cap is present at the 5'-end of some mRNAs and stabilizes RNA against 5'-processing. Has preference for mRNAs with a 5'-end purine. Catalyzes the hydrolysis of a broad range of dinucleotide pyrophosphates. The sequence is that of NAD-capped RNA hydrolase NudC from Salmonella typhimurium (strain LT2 / SGSC1412 / ATCC 700720).